The primary structure comprises 92 residues: Nodulation protein F (92 aa).

Residues Q4–I88 enclose the Carrier domain. S45 carries the post-translational modification O-(pantetheine 4'-phosphoryl)serine.

4'-phosphopantetheine is transferred from CoA to a specific serine of apo-NodF.

Proposed to synthesize nod factor fatty acyl chain. Involved in trans-2,trans-4,trans-6,cis-11-octadecatetraenoic acid biosynthesis. The sequence is that of Nodulation protein F (nodF) from Rhizobium leguminosarum bv. trifolii.